The sequence spans 449 residues: Zinc finger and BTB domain-containing protein 14 (449 aa).

The BTB domain maps to 36 to 102; it reads CDIAIVVEDV…MYTAKISVKK (67 aa). Lysine 46 is covalently cross-linked (Glycyl lysine isopeptide (Lys-Gly) (interchain with G-Cter in SUMO2)). A Nuclear localization signal motif is present at residues 50-66; the sequence is HRCVLAACSTYFKKLFK. A disordered region spans residues 156–194; sequence ADAQDDDVEEIGDQDDSPSDDTVEGTPPSQEDGKSPTTT. Residues 157–178 are compositionally biased toward acidic residues; sequence DAQDDDVEEIGDQDDSPSDDTV. Residues lysine 203 and lysine 249 each participate in a glycyl lysine isopeptide (Lys-Gly) (interchain with G-Cter in SUMO2) cross-link. 5 C2H2-type zinc fingers span residues 277–304, 305–332, 333–360, 361–388, and 389–417; these read IACQ…ADRP, FVCE…GYKP, YSCE…NERP, FACH…GEKP, and FVCG…ERKQ. A compositionally biased stretch (basic and acidic residues) spans 405–417; it reads KRHENNMHSERKQ. A disordered region spans residues 405-424; the sequence is KRHENNMHSERKQVTPSAIQ.

The protein belongs to the krueppel C2H2-type zinc-finger protein family. As to quaternary structure, interacts with ZBTB21. Ubiquitous.

The protein resides in the nucleus. Functionally, transcriptional activator of the dopamine transporter (DAT), binding it's promoter at the consensus sequence 5'-CCTGCACAGTTCACGGA-3'. Binds to 5'-d(GCC)(n)-3' trinucleotide repeats in promoter regions and acts as a repressor of the FMR1 gene. Transcriptional repressor of MYC and thymidine kinase promoters. The chain is Zinc finger and BTB domain-containing protein 14 (Zbtb14) from Mus musculus (Mouse).